The following is a 400-amino-acid chain: Cytochrome P450 BJ-1 homolog (400 aa).

C349 is a binding site for heme.

This sequence belongs to the cytochrome P450 family. Heme serves as cofactor.

Functionally, cytochromes P450 are a group of heme-thiolate monooxygenases. They oxidize a variety of structurally unrelated compounds, including steroids, fatty acids, and xenobiotics. This Sinorhizobium fredii (strain NBRC 101917 / NGR234) protein is Cytochrome P450 BJ-1 homolog (cyp112A2).